The following is a 615-amino-acid chain: DNA mismatch repair protein MutL (615 aa).

The disordered stretch occupies residues 363-397 (FAEPAAREPVAPRYTPAPASGSRPAAPWPNAQPGY). Residues 364–391 (AEPAAREPVAPRYTPAPASGSRPAAPWP) show a composition bias toward low complexity.

The protein belongs to the DNA mismatch repair MutL/HexB family.

In terms of biological role, this protein is involved in the repair of mismatches in DNA. It is required for dam-dependent methyl-directed DNA mismatch repair. May act as a 'molecular matchmaker', a protein that promotes the formation of a stable complex between two or more DNA-binding proteins in an ATP-dependent manner without itself being part of a final effector complex. The chain is DNA mismatch repair protein MutL from Shigella boydii serotype 4 (strain Sb227).